The following is a 358-amino-acid chain: Carbamoyl phosphate synthase small chain (358 aa).

The interval 1–172 (MKAALALEDG…EAKRFESDGD (172 aa)) is CPSase. Positions 45, 222, and 224 each coordinate L-glutamine. The 185-residue stretch at 174–358 (EVVLVDCGVK…RYVDMLREYR (185 aa)) folds into the Glutamine amidotransferase type-1 domain. Residue Cys249 is the Nucleophile of the active site. The L-glutamine site is built by Leu250, Gln253, Asn291, and Phe294. Residues His333 and Glu335 contribute to the active site.

The protein belongs to the CarA family. In terms of assembly, composed of two chains; the small (or glutamine) chain promotes the hydrolysis of glutamine to ammonia, which is used by the large (or ammonia) chain to synthesize carbamoyl phosphate. Tetramer of heterodimers (alpha,beta)4.

It carries out the reaction hydrogencarbonate + L-glutamine + 2 ATP + H2O = carbamoyl phosphate + L-glutamate + 2 ADP + phosphate + 2 H(+). The catalysed reaction is L-glutamine + H2O = L-glutamate + NH4(+). It participates in amino-acid biosynthesis; L-arginine biosynthesis; carbamoyl phosphate from bicarbonate: step 1/1. Its pathway is pyrimidine metabolism; UMP biosynthesis via de novo pathway; (S)-dihydroorotate from bicarbonate: step 1/3. Functionally, small subunit of the glutamine-dependent carbamoyl phosphate synthetase (CPSase). CPSase catalyzes the formation of carbamoyl phosphate from the ammonia moiety of glutamine, carbonate, and phosphate donated by ATP, constituting the first step of 2 biosynthetic pathways, one leading to arginine and/or urea and the other to pyrimidine nucleotides. The small subunit (glutamine amidotransferase) binds and cleaves glutamine to supply the large subunit with the substrate ammonia. The polypeptide is Carbamoyl phosphate synthase small chain (Archaeoglobus fulgidus (strain ATCC 49558 / DSM 4304 / JCM 9628 / NBRC 100126 / VC-16)).